The sequence spans 126 residues: Small ribosomal subunit protein uS12 (126 aa).

Residues 1-26 (MPTINQLVRKGRASETTKSKSPALQD) form a disordered region. Asp-89 carries the 3-methylthioaspartic acid modification. Residues 101 to 126 (SLDTQGVKDRKQARSKYGAKRAKAAK) form a disordered region. The span at 113-126 (ARSKYGAKRAKAAK) shows a compositional bias: basic residues.

This sequence belongs to the universal ribosomal protein uS12 family. As to quaternary structure, part of the 30S ribosomal subunit. Contacts proteins S8 and S17. May interact with IF1 in the 30S initiation complex.

Functionally, with S4 and S5 plays an important role in translational accuracy. Interacts with and stabilizes bases of the 16S rRNA that are involved in tRNA selection in the A site and with the mRNA backbone. Located at the interface of the 30S and 50S subunits, it traverses the body of the 30S subunit contacting proteins on the other side and probably holding the rRNA structure together. The combined cluster of proteins S8, S12 and S17 appears to hold together the shoulder and platform of the 30S subunit. This chain is Small ribosomal subunit protein uS12, found in Burkholderia pseudomallei (strain 1106a).